The sequence spans 492 residues: Catalase (492 aa).

Active-site residues include histidine 65 and asparagine 138. Residue tyrosine 348 participates in heme binding.

This sequence belongs to the catalase family. In terms of assembly, homotetramer. The cofactor is heme.

The protein localises to the cytoplasm. Its subcellular location is the cytosol. It is found in the peroxisome matrix. It catalyses the reaction 2 H2O2 = O2 + 2 H2O. Functionally, catalyzes the degradation of hydrogen peroxide (H(2)O(2)) generated by peroxisomal oxidases to water and oxygen, thereby protecting cells from the toxic effects of hydrogen peroxide. The polypeptide is Catalase (Helianthus annuus (Common sunflower)).